Consider the following 305-residue polypeptide: Superkiller complex protein 8 (305 aa).

Position 1 is an N-acetylmethionine (Met-1). Thr-2 carries the post-translational modification N-acetylthreonine; in WD repeat-containing protein 61, N-terminally processed. WD repeat units lie at residues 14–57 (AHDD…LELQ), 62–101 (GHQL…QMKS), 104–143 (AGPV…KEYS), 146–187 (TRGK…HTLE), 188–227 (GHAM…LAGT), 230–269 (GHAS…CIHT), and 272–305 (DHQD…DCPI).

It belongs to the SKI8 family. As to quaternary structure, component of the PAF1 complex, which consists of CDC73, PAF1, LEO1, CTR9, RTF1 and SKIC8. The PAF1 complex interacts with PHF5A. Within the PAF1 complex interacts directly with PHF5A. Component of the SKI complex which consists of SKIC2, SKIC3 and SKIC8.

Its subcellular location is the nucleus. The protein localises to the cytoplasm. Its function is as follows. Component of the PAF1 complex (PAF1C) which has multiple functions during transcription by RNA polymerase II and is implicated in regulation of development and maintenance of embryonic stem cell pluripotency. PAF1C associates with RNA polymerase II through interaction with POLR2A CTD non-phosphorylated and 'Ser-2'- and 'Ser-5'-phosphorylated forms and is involved in transcriptional elongation, acting both independently and synergistically with TCEA1 and in cooperation with the DSIF complex and HTATSF1. PAF1C is required for transcription of Hox and Wnt target genes. PAF1C is involved in hematopoiesis and stimulates transcriptional activity of KMT2A/MLL1; it promotes leukemogenesis through association with KMT2A/MLL1-rearranged oncoproteins, such as KMT2A/MLL1-MLLT3/AF9 and KMT2A/MLL1-MLLT1/ENL. PAF1C is involved in histone modifications such as ubiquitination of histone H2B and methylation on histone H3 'Lys-4' (H3K4me3). PAF1C recruits the RNF20/40 E3 ubiquitin-protein ligase complex and the E2 enzyme UBE2A or UBE2B to chromatin which mediate monoubiquitination of 'Lys-120' of histone H2B (H2BK120ub1); UB2A/B-mediated H2B ubiquitination is proposed to be coupled to transcription. PAF1C is involved in mRNA 3' end formation probably through association with cleavage and poly(A) factors. In case of infection by influenza A strain H3N2, PAF1C associates with viral NS1 protein, thereby regulating gene transcription. Required for mono- and trimethylation on histone H3 'Lys-4' (H3K4me3), dimethylation on histone H3 'Lys-79' (H3K4me3). Required for Hox gene transcription. Also acts as a component of the SKI complex, a multiprotein complex that assists the RNA-degrading exosome during the mRNA decay and quality-control pathways. The SKI complex catalyzes mRNA extraction from 80S ribosomal complexes in the 3'-5' direction and channels mRNA to the cytosolic exosome for degradation. SKI-mediated extraction of mRNA from stalled ribosomes allow binding of the Pelota-HBS1L complex and subsequent ribosome disassembly by ABCE1 for ribosome recycling. The sequence is that of Superkiller complex protein 8 (Skic8) from Rattus norvegicus (Rat).